Consider the following 216-residue polypeptide: Adenylate kinase (216 aa).

Position 10–15 (10–15 (GAGKGT)) interacts with ATP. An NMP region spans residues 30–59 (STGDIFRKNISNKTPLGMEAKSYMDKGQLV). Residues Thr-31, Arg-36, 57 to 59 (QLV), 85 to 88 (GFPR), and Gln-92 contribute to the AMP site. The interval 126 to 163 (GRRVCGECGASYHIKFITPKTEGVCDLCGGKLVQRKDD) is LID. An ATP-binding site is contributed by Arg-127. The Zn(2+) site is built by Cys-130 and Cys-133. Position 136–137 (136–137 (SY)) interacts with ATP. Zn(2+) contacts are provided by Cys-150 and Cys-153. 2 residues coordinate AMP: Arg-160 and Arg-171. ATP is bound at residue Lys-199.

This sequence belongs to the adenylate kinase family. Monomer.

It localises to the cytoplasm. It catalyses the reaction AMP + ATP = 2 ADP. It functions in the pathway purine metabolism; AMP biosynthesis via salvage pathway; AMP from ADP: step 1/1. Functionally, catalyzes the reversible transfer of the terminal phosphate group between ATP and AMP. Plays an important role in cellular energy homeostasis and in adenine nucleotide metabolism. The protein is Adenylate kinase of Clostridium tetani (strain Massachusetts / E88).